The primary structure comprises 343 residues: Tetraacyldisaccharide 4'-kinase (343 aa).

51–58 (TVGGAGKT) is a binding site for ATP.

This sequence belongs to the LpxK family.

The enzyme catalyses a lipid A disaccharide + ATP = a lipid IVA + ADP + H(+). It participates in glycolipid biosynthesis; lipid IV(A) biosynthesis; lipid IV(A) from (3R)-3-hydroxytetradecanoyl-[acyl-carrier-protein] and UDP-N-acetyl-alpha-D-glucosamine: step 6/6. Functionally, transfers the gamma-phosphate of ATP to the 4'-position of a tetraacyldisaccharide 1-phosphate intermediate (termed DS-1-P) to form tetraacyldisaccharide 1,4'-bis-phosphate (lipid IVA). This chain is Tetraacyldisaccharide 4'-kinase, found in Xanthobacter autotrophicus (strain ATCC BAA-1158 / Py2).